The following is a 308-amino-acid chain: Coenzyme PQQ synthesis protein B (308 aa).

This sequence belongs to the PqqB family.

Its pathway is cofactor biosynthesis; pyrroloquinoline quinone biosynthesis. Its function is as follows. May be involved in the transport of PQQ or its precursor to the periplasm. This chain is Coenzyme PQQ synthesis protein B, found in Rhodopseudomonas palustris (strain BisB5).